The chain runs to 501 residues: Glucans biosynthesis protein G (501 aa).

Positions 1-25 are cleaved as a signal peptide; sequence MNRRQVLTGLAALPLLQAKPDPAAA.

The protein belongs to the OpgD/OpgG family.

It is found in the periplasm. The protein operates within glycan metabolism; osmoregulated periplasmic glucan (OPG) biosynthesis. Its function is as follows. Involved in the biosynthesis of osmoregulated periplasmic glucans (OPGs). This is Glucans biosynthesis protein G from Rhodopseudomonas palustris (strain ATCC BAA-98 / CGA009).